A 493-amino-acid polypeptide reads, in one-letter code: Na(+)/H(+) antiporter subunit D (493 aa).

The next 15 membrane-spanning stretches (helical) occupy residues 3–23 (NFVI…IFMT), 31–51 (IFST…VQTV), 77–97 (FASL…LYSF), 107–127 (SFYY…FLTG), 129–149 (LFNM…LIVL), 163–183 (IVFN…LYAV), 203–223 (GLIT…GGIF), 227–247 (FWLP…FGAL), 251–271 (VGLY…TAFT), 274–294 (LMIW…LAYS), 299–319 (IVIY…AVHT), 330–350 (LIHD…LIAL), 370–390 (GWMF…SGFV), 407–427 (ISML…RIFI), and 449–469 (LYPA…TEWV).

It belongs to the CPA3 antiporters (TC 2.A.63) subunit D family. Forms a heterooligomeric complex that consists of seven subunits: MrpA, MrpB, MrpC, MrpD, MrpE, MrpF and MrpG.

The protein localises to the cell membrane. Functionally, mrp complex is a Na(+)/H(+) antiporter that is considered to be the major Na(+) excretion system in B.subtilis. Has a major role in Na(+) resistance and a minor role in Na(+)- and K(+)-dependent pH homeostasis as compared to TetB. MrpA may be the actual Na(+)/H(+) antiporter, although the six other Mrp proteins are all required for Na(+)/H(+) antiport activity and Na(+) resistance. MrpA is required for initiation of sporulation when external Na(+) concentration increases. Also transports Li(+) but not K(+), Ca(2+) or Mg(2+). The protein is Na(+)/H(+) antiporter subunit D (mrpD) of Bacillus subtilis (strain 168).